The sequence spans 317 residues: Adenosine receptor A3 (317 aa).

The Extracellular segment spans residues 1–14 (MPVNSTAVSLASVT). N-linked (GlcNAc...) asparagine glycosylation is present at asparagine 4. A helical transmembrane segment spans residues 15 to 37 (YISVEILIGLCAIVGNVLVIWVV). The Cytoplasmic portion of the chain corresponds to 38–48 (KLNPSLQTTTF). Residues 49-72 (YFIVSLALADIAVGVLVMPLAIVI) traverse the membrane as a helical segment. Residues 73–84 (SLGVTIHFYSCL) are Extracellular-facing. Cysteine 83 and cysteine 165 are joined by a disulfide. The helical transmembrane segment at 85–106 (LMTCLLMIFTHASIMSLLAIAV) threads the bilayer. The Cytoplasmic segment spans residues 107-126 (DRYLRVKLTVRYRRVTTQRR). Residues 127–148 (IWLALGLCWLVSFLVGLTPMFG) traverse the membrane as a helical segment. Topologically, residues 149–176 (WNMKLSSADKNLTFLPCQFRSVMRMDYM) are extracellular. Residues 177–197 (VYFSFFTWILIPLVVMCAIYF) form a helical membrane-spanning segment. Residues 198-230 (DIFYVIRNRLSQNFSGSKETGAFYGREFKTAKS) are Cytoplasmic-facing. The helical transmembrane segment at 231 to 254 (LSLVLFLFALSWLPLSIINCIIYF) threads the bilayer. Residues 255-260 (NGEVPQ) are Extracellular-facing. The chain crosses the membrane as a helical span at residues 261-283 (IVLYLGILLSHANSMMNPIVYAY). Residues 284 to 317 (KIKKFKETYLLILKACVICQPSKSMDPSIEQTSE) lie on the Cytoplasmic side of the membrane. Cysteine 302 is lipidated: S-palmitoyl cysteine.

Belongs to the G-protein coupled receptor 1 family. Phosphorylation on Thr-315 and Ser-316 may be crucial for rapid desensitization. Phosphorylation on Thr-315 may be necessary for phosphorylation on Ser-316 to occur.

The protein resides in the cell membrane. Its function is as follows. Receptor for adenosine. The activity of this receptor is mediated by G proteins which inhibits adenylyl cyclase. The protein is Adenosine receptor A3 (ADORA3) of Bos taurus (Bovine).